Consider the following 323-residue polypeptide: Sphingolipid delta(4)-desaturase/C4-monooxygenase DES2 (323 aa).

Gly2 carries N-myristoyl glycine lipidation. Helical transmembrane passes span 41–61 (PHIK…CWLV) and 68–88 (WLLF…TLAI). The Histidine box-1 motif lies at 89-93 (HDISH). The segment at 95-99 (TAFGT) is required for C4-hydroxylase activity. The short motif at 128-132 (HVDHH) is the Histidine box-2 element. The chain crosses the membrane as a helical span at residues 210 to 231 (VYLLGSSLLGLGLHPISGHFVA). The Histidine box-3 signature appears at 259 to 263 (HMEHH).

The protein belongs to the fatty acid desaturase type 1 family. DEGS subfamily. Highly expressed in intestinal crypt cells and adjacent epithelial cells (at protein level).

The protein localises to the endoplasmic reticulum membrane. It catalyses the reaction a dihydroceramide + 2 Fe(II)-[cytochrome b5] + O2 + 2 H(+) = a phytoceramide + 2 Fe(III)-[cytochrome b5] + H2O. It carries out the reaction an N-acylsphinganine + 2 Fe(II)-[cytochrome b5] + O2 + 2 H(+) = an N-acylsphing-4-enine + 2 Fe(III)-[cytochrome b5] + 2 H2O. The enzyme catalyses an N-acylsphinganine + 2 Fe(II)-[cytochrome b5] + O2 + 2 H(+) = an N-acyl-(4R)-4-hydroxysphinganine + 2 Fe(III)-[cytochrome b5] + H2O. The catalysed reaction is N-octanoylsphinganine + 2 Fe(II)-[cytochrome b5] + O2 + 2 H(+) = N-octanoyl-4-hydroxysphinganine + 2 Fe(III)-[cytochrome b5] + H2O. It participates in membrane lipid metabolism; sphingolipid biosynthesis. Its function is as follows. Bifunctional enzyme which acts both as a sphingolipid delta(4)-desaturase and a sphingolipid C4-monooxygenase. The polypeptide is Sphingolipid delta(4)-desaturase/C4-monooxygenase DES2 (Mus musculus (Mouse)).